We begin with the raw amino-acid sequence, 386 residues long: Patatin (386 aa).

An N-terminal signal peptide occupies residues 1 to 23; that stretch reads MATTKSFLILFFMILATTSSTCA. The region spanning 32-229 is the PNPLA domain; it reads LSIDGGGIKG…TVGDPALLSL (198 aa). The short motif at 36-41 is the GXGXXG element; sequence GGGIKG. A GXSXG motif is present at residues 75 to 79; it reads GTSTG. Serine 77 acts as the Nucleophile in catalysis. The N-linked (GlcNAc...) asparagine glycan is linked to asparagine 115. Residue aspartate 215 is the Proton acceptor of the active site. The DGA/G signature appears at 215–217; sequence DGA.

This sequence belongs to the patatin family.

The protein localises to the vacuole. Functionally, probable lipolytic acyl hydrolase (LAH), an activity which is thought to be involved in the response of tubers to pathogens. The polypeptide is Patatin (Solanum tuberosum (Potato)).